The sequence spans 460 residues: A-type ATP synthase subunit B (460 aa).

This sequence belongs to the ATPase alpha/beta chains family. Has multiple subunits with at least A(3), B(3), C, D, E, F, H, I and proteolipid K(x).

It is found in the cell membrane. Functionally, component of the A-type ATP synthase that produces ATP from ADP in the presence of a proton gradient across the membrane. The B chain is a regulatory subunit. This chain is A-type ATP synthase subunit B, found in Methanosarcina barkeri.